A 409-amino-acid chain; its full sequence is Multifunctional CCA protein (409 aa).

ATP contacts are provided by glycine 8 and arginine 11. CTP is bound by residues glycine 8 and arginine 11. Mg(2+)-binding residues include aspartate 21 and aspartate 23. 3 residues coordinate ATP: arginine 91, arginine 137, and arginine 140. 3 residues coordinate CTP: arginine 91, arginine 137, and arginine 140. One can recognise an HD domain in the interval 228–329; the sequence is TGVHVLSVLE…LELLQSFDVY (102 aa).

This sequence belongs to the tRNA nucleotidyltransferase/poly(A) polymerase family. Bacterial CCA-adding enzyme type 1 subfamily. As to quaternary structure, monomer. Can also form homodimers and oligomers. The cofactor is Mg(2+). It depends on Ni(2+) as a cofactor.

It carries out the reaction a tRNA precursor + 2 CTP + ATP = a tRNA with a 3' CCA end + 3 diphosphate. The catalysed reaction is a tRNA with a 3' CCA end + 2 CTP + ATP = a tRNA with a 3' CCACCA end + 3 diphosphate. Functionally, catalyzes the addition and repair of the essential 3'-terminal CCA sequence in tRNAs without using a nucleic acid template. Adds these three nucleotides in the order of C, C, and A to the tRNA nucleotide-73, using CTP and ATP as substrates and producing inorganic pyrophosphate. tRNA 3'-terminal CCA addition is required both for tRNA processing and repair. Also involved in tRNA surveillance by mediating tandem CCA addition to generate a CCACCA at the 3' terminus of unstable tRNAs. While stable tRNAs receive only 3'-terminal CCA, unstable tRNAs are marked with CCACCA and rapidly degraded. This is Multifunctional CCA protein from Pseudomonas savastanoi pv. phaseolicola (strain 1448A / Race 6) (Pseudomonas syringae pv. phaseolicola (strain 1448A / Race 6)).